The following is an 870-amino-acid chain: MSLITIFAFFIKATLVLSLDILTPTTLTGDQTFNEDVSVVSSLTLNDGSQYLFNNLLQIAPSSASVTANALAAVSVFTFSLPPSSSLSNSGTLIISNSNTGPSTEQHIVITPNVMANTGTITLSLAHTNTDSSSTLIIDPVTFYNTGTINYESIGSETNDPSLTGNILSIGSSGRTLQNLGTINLNAANSYYLLGTITENSGSINVQKGFLYVNALDFIGNTINLSTTTALAFISPVSQVVRVRGVFFGNIIASVGSSGTFSYNTQTGILTVTTNGVYSYDIGCGYNPALMSGQQETLSFQGNLYDTFLVLVNQPIPSDLTCAAVSSSITPSSSVEPSSSVEPSSSVEPSSSVEPSSSVEPSSSVEPSSSVEPSSSVEPSSSVEPSSSVEPSSSVEPSSSVEPSSSVEPSSSVEPSSSVEPSSSVEPSSSVEPSSSVEPSSSVEPSSSVEPSSPAVPSSSAEPSSSVVPPITPIPSSSVVSASVFDTSSTLPSSPTVPTSSVSPSSPTVPTSSVSPSSPTVPTSSESPSTLSTPSSSAAPSSFCPTCVSSGTPPAPSSSAVVPTSSAGGGNGGDNGQPGADGQPGAAGQPGAAGQPGAAGQPGAAGQPGAAGQPGAAGQPGAAGQPGAAGQPGAAGQPGAAGQPGAGSGGGSEQPTPGAGAGSGSADGNQSGTSSGTGNGQAGSGQAGSGQVGSGQAGAGQAGSGQAGAGQAGSGQAGAGQAGLDNTASGQSEGGQASAMDGDQSGRGGQSNSGSLLQPNAQQGTGSGTGSDTGADQASGESPGQIGDAQPGSGTDQSSGRHSLAAEARTSQSHSLAADARTRSTTRQTSVIAPGTAPGTAVVTTFHGCGTVNHKGMINILLALALLVLL.

Residues 1 to 18 form the signal peptide; sequence MSLITIFAFFIKATLVLS. N224 carries an N-linked (GlcNAc...) asparagine glycan. An intrachain disulfide couples C284 to C322. The tract at residues 329-835 is disordered; the sequence is ITPSSSVEPS…TRQTSVIAPG (507 aa). Over residues 331–566 the composition is skewed to low complexity; it reads PSSSVEPSSS…SSSAVVPTSS (236 aa). A compositionally biased stretch (gly residues) spans 567 to 576; it reads AGGGNGGDNG. A compositionally biased stretch (low complexity) spans 577–641; that stretch reads QPGADGQPGA…PGAAGQPGAA (65 aa). Residues 642 to 652 are compositionally biased toward gly residues; the sequence is GQPGAGSGGGS. An N-linked (GlcNAc...) asparagine glycan is attached at N669. Residues 675–721 show a composition bias toward gly residues; that stretch reads SGTGNGQAGSGQAGSGQVGSGQAGAGQAGSGQAGAGQAGSGQAGAGQ. Composition is skewed to polar residues over residues 724-735 and 792-801; these read LDNTASGQSEGG and GSGTDQSSGR.

It localises to the secreted. It is found in the cell wall. Its function is as follows. May play a role in cell adhesion. The chain is Adhesin AWP1 from Candida glabrata (strain ATCC 2001 / BCRC 20586 / JCM 3761 / NBRC 0622 / NRRL Y-65 / CBS 138) (Yeast).